The chain runs to 363 residues: Cinnamyl alcohol dehydrogenase 2 (363 aa).

Position 47 (Cys47) interacts with Zn(2+). Thr49 contacts NADP(+). The Zn(2+) site is built by His69, Glu70, Cys100, Cys103, Cys106, Cys114, and Cys163. NADP(+)-binding positions include Thr167, 188–193 (GLGGVG), 211–216 (SSSARK), Thr251, Gly275, and 298–300 (SFI).

This sequence belongs to the zinc-containing alcohol dehydrogenase family. In terms of assembly, homodimer. The cofactor is Zn(2+). As to expression, expressed in roots behind the root tips in the pericycle region and layer of cortical cells adjacent to the exodermis. Expressed in vascular bundles and lateral veins of leaf sheaths and blades. Expressed in the vicinity of vascular bundles in the first internode below the inflorescence. Highly expressed in the culm.

The catalysed reaction is (E)-cinnamyl alcohol + NADP(+) = (E)-cinnamaldehyde + NADPH + H(+). It catalyses the reaction (E)-coniferol + NADP(+) = (E)-coniferaldehyde + NADPH + H(+). It carries out the reaction (E)-sinapyl alcohol + NADP(+) = (E)-sinapaldehyde + NADPH + H(+). The enzyme catalyses (E)-4-coumaroyl alcohol + NADP(+) = (E)-4-coumaraldehyde + NADPH + H(+). The catalysed reaction is (E)-caffeyl alcohol + NADP(+) = (E)-caffeyl aldehyde + NADPH + H(+). Its pathway is aromatic compound metabolism; phenylpropanoid biosynthesis. Its function is as follows. Involved in lignin biosynthesis. Catalyzes the final step specific for the production of lignin monomers. Catalyzes the NADPH-dependent reduction of coniferaldehyde and sinapaldehyde to their respective alcohols. Plays the major role in monolignol biosynthesis. Functions cooperatively with COMT in the culm internodes for the biosynthesis of monolignols, the lignin precursors. May be involved in lignin biosynthesis in leaves and roots. The chain is Cinnamyl alcohol dehydrogenase 2 from Oryza sativa subsp. japonica (Rice).